The sequence spans 201 residues: Adenylyl-sulfate kinase (201 aa).

Residues 1-23 (MALHDENVVWHSHPVTPQQREQH) form a disordered region. 35 to 42 (GLSGSGKS) is an ATP binding site. Residue serine 109 is the Phosphoserine intermediate of the active site.

It belongs to the APS kinase family.

It carries out the reaction adenosine 5'-phosphosulfate + ATP = 3'-phosphoadenylyl sulfate + ADP + H(+). Its pathway is sulfur metabolism; hydrogen sulfide biosynthesis; sulfite from sulfate: step 2/3. In terms of biological role, catalyzes the synthesis of activated sulfate. The protein is Adenylyl-sulfate kinase of Escherichia coli O127:H6 (strain E2348/69 / EPEC).